The chain runs to 170 residues: Adenine phosphoribosyltransferase (170 aa).

Belongs to the purine/pyrimidine phosphoribosyltransferase family. In terms of assembly, homodimer.

It is found in the cytoplasm. The enzyme catalyses AMP + diphosphate = 5-phospho-alpha-D-ribose 1-diphosphate + adenine. The protein operates within purine metabolism; AMP biosynthesis via salvage pathway; AMP from adenine: step 1/1. In terms of biological role, catalyzes a salvage reaction resulting in the formation of AMP, that is energically less costly than de novo synthesis. In Halothermothrix orenii (strain H 168 / OCM 544 / DSM 9562), this protein is Adenine phosphoribosyltransferase.